The chain runs to 103 residues: Urease subunit gamma (103 aa).

This sequence belongs to the urease gamma subunit family. Heterotrimer of UreA (gamma), UreB (beta) and UreC (alpha) subunits. Three heterotrimers associate to form the active enzyme.

The protein resides in the cytoplasm. The enzyme catalyses urea + 2 H2O + H(+) = hydrogencarbonate + 2 NH4(+). It functions in the pathway nitrogen metabolism; urea degradation; CO(2) and NH(3) from urea (urease route): step 1/1. The protein is Urease subunit gamma of Paracoccus denitrificans (strain Pd 1222).